A 511-amino-acid chain; its full sequence is Archaeal glutamate synthase [NADPH] (511 aa).

2 4Fe-4S ferredoxin-type domains span residues 15 to 44 and 46 to 75; these read FMIE…YDEE and DMMR…VKPH. Positions 24, 27, 30, 34, 55, 58, 61, and 65 each coordinate [4Fe-4S] cluster.

The protein belongs to the glutamate synthase family. FMN serves as cofactor.

The enzyme catalyses 2 L-glutamate + NADP(+) = L-glutamine + 2-oxoglutarate + NADPH + H(+). The protein is Archaeal glutamate synthase [NADPH] of Archaeoglobus fulgidus (strain ATCC 49558 / DSM 4304 / JCM 9628 / NBRC 100126 / VC-16).